The primary structure comprises 115 residues: NADH-ubiquinone oxidoreductase chain 3 (115 aa).

Helical transmembrane passes span 3-23 (LMLTLLTNTLLASLLVLIAFW), 55-75 (FFLVAITFLLFDLEIALLLPL), and 84-104 (LNTMLIMALVLISLLAISLAY).

The protein belongs to the complex I subunit 3 family. In terms of assembly, core subunit of respiratory chain NADH dehydrogenase (Complex I) which is composed of 45 different subunits. Interacts with TMEM186. Interacts with TMEM242.

The protein resides in the mitochondrion inner membrane. It catalyses the reaction a ubiquinone + NADH + 5 H(+)(in) = a ubiquinol + NAD(+) + 4 H(+)(out). In terms of biological role, core subunit of the mitochondrial membrane respiratory chain NADH dehydrogenase (Complex I) which catalyzes electron transfer from NADH through the respiratory chain, using ubiquinone as an electron acceptor. Essential for the catalytic activity of complex I. In Equus caballus (Horse), this protein is NADH-ubiquinone oxidoreductase chain 3.